We begin with the raw amino-acid sequence, 269 residues long: UPF0162 protein bbp_163 (269 aa).

Belongs to the UPF0162 family.

This Buchnera aphidicola subsp. Baizongia pistaciae (strain Bp) protein is UPF0162 protein bbp_163.